The following is a 646-amino-acid chain: MSKNIYPVPTHIKNTALVDNDKYNKMYKHSIDDPQSFWAEHGKRLDWFTPYSKVKNTTFDKGHINIKWYEDGYLNASYNCIDRHLKTKANKVALIWEGDNPSQSEHITYQKLHDEVAKFANGLKKLGVQKGDRVAIYMPMSPQAIYAMQGCARIGAIHSVIFGGFSPSAIADRIKDSGAKVVITSDEGRRAGNCVPLKANVDEAVLQESVTSIEHVIVHQLTGGDVDWHDHDIWWHDLVADEEPVCEPEVMNAEDPLFILYTSGSTGQPKGVVHTTGGYLVYASMTHEYIFDVKEDDVFWCSADVGWITGHSYIAYGPLVNGCTQVVFEGVPTYPTAGRMGEVVDKHGVTILYTAPTAIRALMAKGDEPVASSHRNSLRILGSVGEPINPEAWNWYYEQIGKSNCPIVDTWWQTETGGIMITPLPGATDLKPGSATRPFFGIAPAIFDAEGNTLEGEADGNLVILDSWPSQARTIYGDHERFEQTYFSTYPGVYFCGDGCRRDEDGYYWITGRVDDVLNISGHRLGTAEIESALVAHPAVAEAAVVGYPHDIKGQGIYVYITPNEGITVSDELTKEIRNWVRKELSPIASPDMIQWSPGLPKTRSGKIMRRILRKIAANEHEQLGDTSTLADPSVVDELIENRLNR.

CoA is bound by residues Arg190 to Asn193 and Thr309. Residues Gly385–Pro387, Asp409–Thr414, Asp498, and Arg513 contribute to the ATP site. Ser521 provides a ligand contact to CoA. Arg524 is a binding site for ATP. Mg(2+) is bound by residues Val535, His537, and Val540. Arg582 is a CoA binding site. An N6-acetyllysine modification is found at Lys607.

The protein belongs to the ATP-dependent AMP-binding enzyme family. Requires Mg(2+) as cofactor. Acetylated. Deacetylation by the SIR2-homolog deacetylase activates the enzyme.

The catalysed reaction is acetate + ATP + CoA = acetyl-CoA + AMP + diphosphate. Its function is as follows. Catalyzes the conversion of acetate into acetyl-CoA (AcCoA), an essential intermediate at the junction of anabolic and catabolic pathways. AcsA undergoes a two-step reaction. In the first half reaction, AcsA combines acetate with ATP to form acetyl-adenylate (AcAMP) intermediate. In the second half reaction, it can then transfer the acetyl group from AcAMP to the sulfhydryl group of CoA, forming the product AcCoA. The polypeptide is Acetyl-coenzyme A synthetase (Pseudoalteromonas translucida (strain TAC 125)).